Consider the following 505-residue polypeptide: MDLLLLEKTLLGLFIAAITAIAISKLRGRRFKLPPGPIPVPIFGNWLQVGDDLNHRNLTDLAKRFGDIFLLRMGQRNLVVVSSPELAKEVLHTQGVEFGSRTRNVVFDIFTGKGQDMVFTVYGEHWRKMRRIMTVPFFTNKVVQQYRFGWESEAASVVDDVRRNPDAAAGGIVLRRRLQLMMYNNMYRIMFDRRFESEEDPLFVKLKALNGERSRLAQSFEYNYGDFIPILRPFLKGYLKICKEVKERRLKLFKDYFVDERMKLESTKSTSNEGLKCAIDHILDAQKKGEINEDNVLYIVENINVAAIETTLWSIEWGIAELVNHPEIQKKVRDEIDRVLGPGHQVTEPDMQKLPYLQAVIKETLRLRMAIPLLVPHMNLHDAKLGGYDIPAESKILVNAWWLANNPANWKRPEEFRPERFLEEESHVEANGNDFRYLPFGVGRRSCPGIILALPILGITLGRLVQNFELLPPPGQSKLDTAEKGGQFSLHILKHSTIVAKPRSF.

The helical transmembrane segment at 3-23 (LLLLEKTLLGLFIAAITAIAI) threads the bilayer. (E)-cinnamate contacts are provided by residues 213-218 (RSRLAQ) and Ala306. Cys447 is a binding site for heme.

This sequence belongs to the cytochrome P450 family. It depends on heme as a cofactor.

It localises to the membrane. It catalyses the reaction (E)-cinnamate + reduced [NADPH--hemoprotein reductase] + O2 = (E)-4-coumarate + oxidized [NADPH--hemoprotein reductase] + H2O + H(+). It functions in the pathway phenylpropanoid metabolism; trans-4-coumarate biosynthesis; trans-4-coumarate from trans-cinnamate: step 1/1. Its function is as follows. Catalyzes the first oxidative step of the phenylpropanoid pathway in higher plants by transforming trans-cinnamate into p-coumarate. The compounds formed by this pathway are essential components for lignification, pollination, and defense against ultraviolet light, predators and pathogens. This is Trans-cinnamate 4-monooxygenase (CYP73A14) from Glycyrrhiza echinata (Licorice).